The chain runs to 568 residues: C6 finger domain transcription factor BOA13 (568 aa).

Residues 14–41 (CNECHASKVRCSGERTGCRRCVYNQQKC) constitute a DNA-binding region (zn(2)-C6 fungal-type). 3 disordered regions span residues 92–114 (EANGNDLNSKPNDVPVESSEGIT), 207–278 (ATSS…HHNH), and 467–490 (RSRSLSTPSPRNTPSTSNSPFSNP). Basic and acidic residues predominate over residues 242 to 259 (HSDLSEKQAQHAQNDLRW). Positions 260–274 (RSQSQSYKRPTISTQ) are enriched in polar residues. Residues 470-490 (SLSTPSPRNTPSTSNSPFSNP) are compositionally biased toward low complexity.

The protein localises to the nucleus. Functionally, transcription factor that probably regulates the gene clusters that mediates the biosynthesis of botcinin acid and its botcinin derivatives, acetate-derived polyketides that contribute to virulence when combined with the sesquiterpene botrydial. Botcinin acid and its derivatives have been shown to induce chlorosis and necrosis during host plant infection, but also have antifungal activities. The protein is C6 finger domain transcription factor BOA13 of Botryotinia fuckeliana (strain B05.10) (Noble rot fungus).